A 396-amino-acid chain; its full sequence is Enoyl-[acyl-carrier-protein] reductase [NADH] (396 aa).

Residues 47–52 (GASTGF), 73–74 (FE), 110–111 (DA), and 138–139 (LA) contribute to the NAD(+) site. Residue Tyr224 participates in substrate binding. Tyr234 serves as the catalytic Proton donor. Residues Lys243 and 272–274 (LVT) contribute to the NAD(+) site.

This sequence belongs to the TER reductase family. As to quaternary structure, monomer.

The enzyme catalyses a 2,3-saturated acyl-[ACP] + NAD(+) = a (2E)-enoyl-[ACP] + NADH + H(+). Its pathway is lipid metabolism; fatty acid biosynthesis. Involved in the final reduction of the elongation cycle of fatty acid synthesis (FAS II). Catalyzes the reduction of a carbon-carbon double bond in an enoyl moiety that is covalently linked to an acyl carrier protein (ACP). This Cytophaga hutchinsonii (strain ATCC 33406 / DSM 1761 / CIP 103989 / NBRC 15051 / NCIMB 9469 / D465) protein is Enoyl-[acyl-carrier-protein] reductase [NADH].